Reading from the N-terminus, the 85-residue chain is N.vectensis toxin 1 5 (85 aa).

Positions 1–20 are cleaved as a signal peptide; sequence MASFKIVIVCLALLVAVACA. Residues 21–36 constitute a propeptide that is removed on maturation; the sequence is RRRDMMSDDELDFHLS. 3 disulfides stabilise this stretch: Cys-42–Cys-82, Cys-44–Cys-72, and Cys-65–Cys-83.

This sequence belongs to the sea anemone sodium channel inhibitory toxin family. Type II subfamily. In terms of tissue distribution, expressed in ectodermal glands and in clumps outside of the extodermal layer. Is not expressed in nematocytes. In adult female tissues, shows similar expression levels in mesenteries (gametes-producing tissue), tentacles, pharynx and physa.

It localises to the secreted. In terms of biological role, binds to site 3 of voltage-gated sodium channels and inhibits the inactivation process. Is highly active on DmNav1/TipE (drosophila) and is only extremely weakly active on rat Nav1.4-beta-1/SCN4A-SCN1B, and on human Nav1.5-beta-1/SCN5A-beta-1. This reveals high specificity for arthropod over mammalian channels. In vivo, when released into the medium, this recombinant toxin induces impaired swimming, paralysis and death of the crustacean A.nauplii within several hours. Also causes paralysis of cherry shrimps immediately after injection at very low doses. Its effect on zebrafish (D.rerio) larvae is also rapid, since it induces tail twitching accompanied by impaired swimming after 20 minutes and complete paralysis within 45 minutes. It has also been observed to cause death of zebrafish larvae within 1 hour. In Nematostella vectensis (Starlet sea anemone), this protein is N.vectensis toxin 1 5.